The following is an 804-amino-acid chain: Phenylalanine--tRNA ligase beta subunit (804 aa).

Positions 38-148 (RAAFRAFTIA…ENAPVGTSFA (111 aa)) constitute a tRNA-binding domain. The region spanning 401–476 (HTARVIDFPV…RIHGINRIDP (76 aa)) is the B5 domain. Aspartate 454, aspartate 460, glutamate 463, and glutamate 464 together coordinate Mg(2+). Residues 710-803 (SLFQSLKRDY…VAKQTGGVLR (94 aa)) form the FDX-ACB domain.

The protein belongs to the phenylalanyl-tRNA synthetase beta subunit family. Type 1 subfamily. Tetramer of two alpha and two beta subunits. Requires Mg(2+) as cofactor.

It localises to the cytoplasm. It carries out the reaction tRNA(Phe) + L-phenylalanine + ATP = L-phenylalanyl-tRNA(Phe) + AMP + diphosphate + H(+). The polypeptide is Phenylalanine--tRNA ligase beta subunit (Brucella melitensis biotype 1 (strain ATCC 23456 / CCUG 17765 / NCTC 10094 / 16M)).